A 141-amino-acid chain; its full sequence is Sperm protein associated with the nucleus on the X chromosome N3 (141 aa).

Over residues Met-1–Gly-10 the composition is skewed to polar residues. 2 disordered regions span residues Met-1–Ser-47 and Asn-66–Asp-141. Positions Glu-11–Glu-26 are enriched in basic and acidic residues. A compositionally biased stretch (polar residues) spans Asn-66–Pro-80. Residues Glu-84 to Gly-103 are compositionally biased toward acidic residues. A compositionally biased stretch (polar residues) spans Glu-132–Asp-141.

The protein belongs to the SPAN-X family.

The polypeptide is Sperm protein associated with the nucleus on the X chromosome N3 (SPANXN3) (Homo sapiens (Human)).